Consider the following 262-residue polypeptide: Ribosomal RNA small subunit methyltransferase A (262 aa).

6 residues coordinate S-adenosyl-L-methionine: H16, L18, G43, E64, D89, and N109.

The protein belongs to the class I-like SAM-binding methyltransferase superfamily. rRNA adenine N(6)-methyltransferase family. RsmA subfamily.

It localises to the cytoplasm. It carries out the reaction adenosine(1518)/adenosine(1519) in 16S rRNA + 4 S-adenosyl-L-methionine = N(6)-dimethyladenosine(1518)/N(6)-dimethyladenosine(1519) in 16S rRNA + 4 S-adenosyl-L-homocysteine + 4 H(+). Its function is as follows. Specifically dimethylates two adjacent adenosines (A1518 and A1519) in the loop of a conserved hairpin near the 3'-end of 16S rRNA in the 30S particle. May play a critical role in biogenesis of 30S subunits. The protein is Ribosomal RNA small subunit methyltransferase A of Xanthomonas campestris pv. campestris (strain 8004).